The primary structure comprises 237 residues: Ribosomal RNA small subunit methyltransferase G (237 aa).

S-adenosyl-L-methionine-binding positions include glycine 78, phenylalanine 83, 129-130 (AE), and arginine 148.

This sequence belongs to the methyltransferase superfamily. RNA methyltransferase RsmG family.

The protein localises to the cytoplasm. Its function is as follows. Specifically methylates the N7 position of a guanine in 16S rRNA. The polypeptide is Ribosomal RNA small subunit methyltransferase G (Streptococcus pyogenes serotype M49 (strain NZ131)).